The chain runs to 146 residues: Envelope protein OPG155 (146 aa).

A helical; Signal-anchor for type III membrane protein transmembrane segment spans residues M1–I21. Residues Q22–L146 are Intravirion-facing.

It belongs to the orthopoxvirus OPG155 protein family. As to quaternary structure, part of a stable entry-fusion complex (EFC) which is at least composed of proteins OPG143, OPG147, OPG155, OPG086, OPG094, OPG107, OPG104, and OPG099. Formation of the viral membrane is necessary for the assembly of the complex. Interacts directly with protein OPG107. Contains two intramolecular disulfide bonds. They are created by the viral disulfide bond formation pathway, a poxvirus-specific pathway that operates on the cytoplasmic side of the MV membranes.

It is found in the virion membrane. Envelope protein required for virus entry into host cell and for cell-cell fusion (syncytium formation). This is Envelope protein OPG155 (OPG155) from Variola virus (isolate Human/India/Ind3/1967) (VARV).